We begin with the raw amino-acid sequence, 329 residues long: Sulfate/thiosulfate import ATP-binding protein CysA (329 aa).

The ABC transporter domain maps to I3–L237. G35 to T42 contacts ATP.

This sequence belongs to the ABC transporter superfamily. Sulfate/tungstate importer (TC 3.A.1.6) family. As to quaternary structure, the complex is composed of two ATP-binding proteins (CysA), two transmembrane proteins (CysT and CysW) and a solute-binding protein (CysP).

Its subcellular location is the cell inner membrane. The enzyme catalyses sulfate(out) + ATP + H2O = sulfate(in) + ADP + phosphate + H(+). It catalyses the reaction thiosulfate(out) + ATP + H2O = thiosulfate(in) + ADP + phosphate + H(+). Part of the ABC transporter complex CysAWTP involved in sulfate/thiosulfate import. Responsible for energy coupling to the transport system. In Pseudomonas aeruginosa (strain ATCC 15692 / DSM 22644 / CIP 104116 / JCM 14847 / LMG 12228 / 1C / PRS 101 / PAO1), this protein is Sulfate/thiosulfate import ATP-binding protein CysA.